Reading from the N-terminus, the 71-residue chain is uncharacterized protein (71 aa).

The tract at residues Met1–Lys20 is disordered.

This is an uncharacterized protein from Methanocaldococcus jannaschii (strain ATCC 43067 / DSM 2661 / JAL-1 / JCM 10045 / NBRC 100440) (Methanococcus jannaschii).